We begin with the raw amino-acid sequence, 192 residues long: Putative manganese efflux pump MntP (192 aa).

A run of 6 helical transmembrane segments spans residues 3–23, 38–58, 61–81, 101–121, 130–150, and 167–187; these read LIFTSVLIGIGLAMDCLAVSF, FILALFFGGFQGGMTLLGWLL, GFADAIAAYDHWVAAGLLFII, VFNFVAVFILAVATSIDALAV, IVPLIPALIIGLISAIFSVGG, and ILGGVILTLIGIRILLEHLVW.

The protein belongs to the MntP (TC 9.B.29) family.

The protein localises to the cell membrane. In terms of biological role, probably functions as a manganese efflux pump. This is Putative manganese efflux pump MntP from Methanospirillum hungatei JF-1 (strain ATCC 27890 / DSM 864 / NBRC 100397 / JF-1).